The sequence spans 284 residues: D-tagatose-1,6-bisphosphate aldolase subunit GatY (284 aa).

The active-site Proton donor is aspartate 82. Zn(2+)-binding residues include histidine 83 and histidine 180. Glycine 181 contributes to the dihydroxyacetone phosphate binding site. Histidine 208 is a binding site for Zn(2+). Residues 209-211 (GAS) and 230-233 (NVAT) each bind dihydroxyacetone phosphate.

Belongs to the class II fructose-bisphosphate aldolase family. TagBP aldolase GatY subfamily. In terms of assembly, forms a complex with GatZ. Requires Zn(2+) as cofactor.

It catalyses the reaction D-tagatofuranose 1,6-bisphosphate = D-glyceraldehyde 3-phosphate + dihydroxyacetone phosphate. It functions in the pathway carbohydrate metabolism; D-tagatose 6-phosphate degradation; D-glyceraldehyde 3-phosphate and glycerone phosphate from D-tagatose 6-phosphate: step 2/2. Its function is as follows. Catalytic subunit of the tagatose-1,6-bisphosphate aldolase GatYZ, which catalyzes the reversible aldol condensation of dihydroxyacetone phosphate (DHAP or glycerone-phosphate) with glyceraldehyde 3-phosphate (G3P) to produce tagatose 1,6-bisphosphate (TBP). Requires GatZ subunit for full activity and stability. Is involved in the catabolism of galactitol. In Escherichia coli O7:K1 (strain IAI39 / ExPEC), this protein is D-tagatose-1,6-bisphosphate aldolase subunit GatY.